Reading from the N-terminus, the 569-residue chain is Urease subunit alpha (569 aa).

Positions 131-569 (GGMDAHIHYI…LPMAQRYFLF (439 aa)) constitute a Urease domain. Positions 136, 138, and 218 each coordinate Ni(2+). At K218 the chain carries N6-carboxylysine. H220 is a binding site for substrate. Ni(2+) is bound by residues H247 and H273. H321 functions as the Proton donor in the catalytic mechanism. D361 is a Ni(2+) binding site.

It belongs to the metallo-dependent hydrolases superfamily. Urease alpha subunit family. As to quaternary structure, heterotrimer of UreA (gamma), UreB (beta) and UreC (alpha) subunits. Three heterotrimers associate to form the active enzyme. Ni cation serves as cofactor. Post-translationally, carboxylation allows a single lysine to coordinate two nickel ions.

The protein localises to the cytoplasm. It catalyses the reaction urea + 2 H2O + H(+) = hydrogencarbonate + 2 NH4(+). The protein operates within nitrogen metabolism; urea degradation; CO(2) and NH(3) from urea (urease route): step 1/1. This is Urease subunit alpha from Agrobacterium fabrum (strain C58 / ATCC 33970) (Agrobacterium tumefaciens (strain C58)).